Here is a 291-residue protein sequence, read N- to C-terminus: MSCQSFTSADTFITLNSDASAALPLRMHHSAAECLPASNHATNVMSTATGLHYSVPSCHYGNQPSTYGVMAGSLTPCLYKFPDHTLSHGFPPLHQPLLAEDPAASEFKQELRRKSKLVEEPIDMDSPEIRELEQFANEFKVRRIKLGYTQTNVGEALAAVHGSEFSQTTICRFENLQLSFKNACKLKAILSKWLEEAEQVGALYNEKVGANERKRKRRTTISVAAKDALERHFGEHSKPSSQEIMRMAEELNLEKEVVRVWFCNRRQREKRVKTSLNQSLFSISKEHLECR.

The 9aaTAD motif lies at 5 to 13 (SFTSADTFI). Positions 124 to 198 (MDSPEIRELE…ILSKWLEEAE (75 aa)) constitute a POU-specific domain. A DNA-binding region (homeobox) is located at residues 214 to 273 (KRKRRTTISVAAKDALERHFGEHSKPSSQEIMRMAEELNLEKEVVRVWFCNRRQREKRVK).

This sequence belongs to the POU transcription factor family. Class-1 subfamily. In terms of assembly, interacts with PITX1. Interacts with LHX3. Interacts with ELK1.

It is found in the nucleus. Its function is as follows. Transcription factor involved in the specification of the lactotrope, somatotrope, and thyrotrope phenotypes in the developing anterior pituitary. Activates growth hormone and prolactin genes. Specifically binds to the consensus sequence 5'-TAAAT-3'. The protein is Pituitary-specific positive transcription factor 1 (Pou1f1) of Mus musculus (Mouse).